A 496-amino-acid polypeptide reads, in one-letter code: Glycerol kinase (496 aa).

Thr-12 provides a ligand contact to ADP. Positions 12, 13, and 14 each coordinate ATP. Thr-12 lines the sn-glycerol 3-phosphate pocket. Arg-16 contributes to the ADP binding site. Sn-glycerol 3-phosphate contacts are provided by Arg-82, Glu-83, and Tyr-134. Positions 82, 83, and 134 each coordinate glycerol. A Phosphohistidine; by HPr modification is found at His-230. Asp-244 is a binding site for sn-glycerol 3-phosphate. Residues Asp-244 and Gln-245 each coordinate glycerol. Residues Thr-266 and Gly-309 each coordinate ADP. Residues Thr-266, Gly-309, Gln-313, and Gly-410 each coordinate ATP. Gly-410 and Asn-414 together coordinate ADP.

It belongs to the FGGY kinase family. As to quaternary structure, homotetramer and homodimer (in equilibrium). The phosphoenolpyruvate-dependent sugar phosphotransferase system (PTS), including enzyme I, and histidine-containing protein (HPr) are required for the phosphorylation, which leads to the activation of the enzyme.

It carries out the reaction glycerol + ATP = sn-glycerol 3-phosphate + ADP + H(+). It participates in polyol metabolism; glycerol degradation via glycerol kinase pathway; sn-glycerol 3-phosphate from glycerol: step 1/1. Its activity is regulated as follows. Activated by phosphorylation and inhibited by fructose 1,6-bisphosphate (FBP). Functionally, key enzyme in the regulation of glycerol uptake and metabolism. Catalyzes the phosphorylation of glycerol to yield sn-glycerol 3-phosphate. In Geobacillus kaustophilus (strain HTA426), this protein is Glycerol kinase.